Reading from the N-terminus, the 292-residue chain is Glutamate racemase (292 aa).

Residues 10–11 (DS) and 42–43 (YG) each bind substrate. Cysteine 73 acts as the Proton donor/acceptor in catalysis. 74-75 (NS) is a binding site for substrate. Catalysis depends on cysteine 186, which acts as the Proton donor/acceptor. 187–188 (TH) contacts substrate.

Belongs to the aspartate/glutamate racemases family.

It carries out the reaction L-glutamate = D-glutamate. It functions in the pathway cell wall biogenesis; peptidoglycan biosynthesis. In terms of biological role, provides the (R)-glutamate required for cell wall biosynthesis. This is Glutamate racemase from Beutenbergia cavernae (strain ATCC BAA-8 / DSM 12333 / CCUG 43141 / JCM 11478 / NBRC 16432 / NCIMB 13614 / HKI 0122).